A 291-amino-acid chain; its full sequence is Protease HtpX homolog (291 aa).

2 helical membrane passes run 4–24 (VFLFLITNLAVILVLSFSARL) and 38–58 (LGMLLAFAALIGFGGSFISLL). His-144 is a binding site for Zn(2+). The active site involves Glu-145. Zn(2+) is bound at residue His-148. The next 2 membrane-spanning stretches (helical) occupy residues 159 to 179 (LIQGVVNTFVIFLARVFAYAL) and 199 to 219 (ISSIAFEIVFGILASIVVMYF). Position 224 (Glu-224) interacts with Zn(2+).

The protein belongs to the peptidase M48B family. The cofactor is Zn(2+).

It is found in the cell inner membrane. This chain is Protease HtpX homolog, found in Chlorobium luteolum (strain DSM 273 / BCRC 81028 / 2530) (Pelodictyon luteolum).